The sequence spans 495 residues: Glutamate--tRNA ligase (495 aa).

The short motif at 12–22 (PSPTGHLHIGN) is the 'HIGH' region element. Positions 259 to 263 (KLSKR) match the 'KMSKS' region motif. Lys-262 contacts ATP.

Belongs to the class-I aminoacyl-tRNA synthetase family. Glutamate--tRNA ligase type 1 subfamily. Monomer.

The protein resides in the cytoplasm. The catalysed reaction is tRNA(Glu) + L-glutamate + ATP = L-glutamyl-tRNA(Glu) + AMP + diphosphate. Catalyzes the attachment of glutamate to tRNA(Glu) in a two-step reaction: glutamate is first activated by ATP to form Glu-AMP and then transferred to the acceptor end of tRNA(Glu). The protein is Glutamate--tRNA ligase of Ligilactobacillus salivarius (strain UCC118) (Lactobacillus salivarius).